Here is a 712-residue protein sequence, read N- to C-terminus: Protein SDA1 homolog (712 aa).

At T234 the chain carries Phosphothreonine. S236 is modified (phosphoserine). Disordered stretches follow at residues 488-573 and 662-712; these read TIDI…DMRI and VNEH…KKMK. 2 stretches are compositionally biased toward acidic residues: residues 491–501 and 516–559; these read IESEDDTDSND and GADD…ESGE. The span at 560 to 572 shows a compositional bias: basic and acidic residues; that stretch reads ESAKAKKEKKDMR. Basic residues-rich tracts occupy residues 671-692 and 700-712; these read REKRKTKNFGMLRHKARSKVKK and ALRKHLLHQKKMK.

The protein belongs to the SDA1 family.

The protein localises to the nucleus. It localises to the nucleolus. In terms of biological role, required for 60S pre-ribosomal subunits export to the cytoplasm. The protein is Protein SDA1 homolog (Mys45A) of Drosophila melanogaster (Fruit fly).